The following is a 195-amino-acid chain: PRELI domain containing protein 3B (195 aa).

The 172-residue stretch at 1–172 (MKIWTSEHVF…VIHKLNAEIE (172 aa)) folds into the PRELI/MSF1 domain. Phosphoserine occurs at positions 46 and 51.

Belongs to the slowmo family.

The sequence is that of PRELI domain containing protein 3B (PRELID3B) from Cricetulus griseus (Chinese hamster).